A 288-amino-acid polypeptide reads, in one-letter code: Pyridoxal kinase PdxY (288 aa).

Residues serine 12 and 47–48 (TQ) contribute to the substrate site. Residues aspartate 114, glutamate 151, lysine 184, and 211-214 (RPLL) contribute to the ATP site. Aspartate 225 serves as a coordination point for substrate.

It belongs to the pyridoxine kinase family. PdxY subfamily. In terms of assembly, homodimer. Mg(2+) is required as a cofactor.

It carries out the reaction pyridoxal + ATP = pyridoxal 5'-phosphate + ADP + H(+). The protein operates within cofactor metabolism; pyridoxal 5'-phosphate salvage; pyridoxal 5'-phosphate from pyridoxal: step 1/1. Pyridoxal kinase involved in the salvage pathway of pyridoxal 5'-phosphate (PLP). Catalyzes the phosphorylation of pyridoxal to PLP. This chain is Pyridoxal kinase PdxY, found in Pseudomonas aeruginosa (strain UCBPP-PA14).